The sequence spans 131 residues: Translation initiation factor 5A (131 aa).

Hypusine is present on Lys36.

Belongs to the eIF-5A family. In terms of processing, the N-terminus is blocked.

It localises to the cytoplasm. In terms of biological role, functions by promoting the formation of the first peptide bond. The sequence is that of Translation initiation factor 5A (eif5a) from Sulfolobus acidocaldarius (strain ATCC 33909 / DSM 639 / JCM 8929 / NBRC 15157 / NCIMB 11770).